The primary structure comprises 286 residues: Elongation factor Ts (286 aa).

An involved in Mg(2+) ion dislocation from EF-Tu region spans residues 82–85; sequence TDFV. Residues 212-286 are disordered; the sequence is VAAQTGQKVE…SPSKKGKKKK (75 aa). Residues 215–227 are compositionally biased toward polar residues; sequence QTGQKVEQPQAAQ. Residues 253-269 are compositionally biased toward low complexity; sequence ETDSPAAETTTEPPKTT.

The protein belongs to the EF-Ts family.

The protein resides in the cytoplasm. In terms of biological role, associates with the EF-Tu.GDP complex and induces the exchange of GDP to GTP. It remains bound to the aminoacyl-tRNA.EF-Tu.GTP complex up to the GTP hydrolysis stage on the ribosome. In Gloeothece citriformis (strain PCC 7424) (Cyanothece sp. (strain PCC 7424)), this protein is Elongation factor Ts.